The sequence spans 203 residues: Endo-type membrane-bound lytic murein transglycosylase A (203 aa).

A signal peptide spans 1-15 (MKLRWLLILVVFLAG). Cysteine 16 is lipidated: N-palmitoyl cysteine. Cysteine 16 is lipidated: S-diacylglycerol cysteine.

Belongs to the transglycosylase Slt family.

The protein localises to the cell outer membrane. The catalysed reaction is Endolytic cleavage of the (1-&gt;4)-beta-glycosidic linkage between N-acetylmuramic acid (MurNAc) and N-acetylglucosamine (GlcNAc) residues in peptidoglycan with concomitant formation of a 1,6-anhydrobond in the MurNAc residue.. Murein-degrading enzyme. May play a role in recycling of muropeptides during cell elongation and/or cell division. Preferentially cleaves at a distance of more than two disaccharide units from the ends of the glycan chain. The sequence is that of Endo-type membrane-bound lytic murein transglycosylase A from Klebsiella pneumoniae (strain 342).